A 376-amino-acid chain; its full sequence is MAKRDYYEVLGISKSASADEIKKAYRKLSKQYHPDINKEAGADEKFKEISEAYEVLSDSQKRAQYDQYGHVDPNQGFGGGAGGGFSGGGFSGFEDIFDTFFGGGGRQQDPNAPRQGSDLQYTMRLKFKEAVFGKDAEIEIPREENCDTCHGSGAKPGTTPEKCSHCGGKGSINVEQNTPFGRVVNKRTCQYCNGTGKEIKEKCSTCHGKGRVTKTKKIKVKVPAGVNDGQQMRVSGEGEAGINGGPNGDLYVVFVVIPDEFFEREADDIYVEVPITFVQATLGDEIDVPTVHGKVRLKIPSGTQTGTTFRLRGKGVPHLRGNGTGDQHVIVKVIVPKKLDDKQKEILREFASTTGDRVDEQTSGFFDKMKRAFKGD.

In terms of domain architecture, J spans 5 to 69 (DYYEVLGISK…QKRAQYDQYG (65 aa)). A CR-type zinc finger spans residues 133–215 (GKDAEIEIPR…CHGKGRVTKT (83 aa)). Zn(2+)-binding residues include C146, C149, C163, C166, C189, C192, C203, and C206. 4 CXXCXGXG motif repeats span residues 146–153 (CDTCHGSG), 163–170 (CSHCGGKG), 189–196 (CQYCNGTG), and 203–210 (CSTCHGKG).

Belongs to the DnaJ family. Homodimer. Zn(2+) serves as cofactor.

It is found in the cytoplasm. In terms of biological role, participates actively in the response to hyperosmotic and heat shock by preventing the aggregation of stress-denatured proteins and by disaggregating proteins, also in an autonomous, DnaK-independent fashion. Unfolded proteins bind initially to DnaJ; upon interaction with the DnaJ-bound protein, DnaK hydrolyzes its bound ATP, resulting in the formation of a stable complex. GrpE releases ADP from DnaK; ATP binding to DnaK triggers the release of the substrate protein, thus completing the reaction cycle. Several rounds of ATP-dependent interactions between DnaJ, DnaK and GrpE are required for fully efficient folding. Also involved, together with DnaK and GrpE, in the DNA replication of plasmids through activation of initiation proteins. The protein is Chaperone protein DnaJ of Listeria welshimeri serovar 6b (strain ATCC 35897 / DSM 20650 / CCUG 15529 / CIP 8149 / NCTC 11857 / SLCC 5334 / V8).